Here is a 223-residue protein sequence, read N- to C-terminus: MDTAVVYADLHLARTGEPKRESPPSLSPDTCQCPRWHRLALKLGCACFILLVLSVIGLGVLVLTLLQKPLLQNSPADVQENRTKSTDSPAKLKCPKDWLSHRDKCFHVSQTSNSWKESLADCDGKGATLLLIQDQEELRFVRNLTKGKDRSFWIGLSYTLPDRNWKWINGSTLNSDVLSITGDTEKGSCASVSQDKVLSESCDSDNIWICQKELKRESTCNDS.

Topologically, residues 1–45 (MDTAVVYADLHLARTGEPKRESPPSLSPDTCQCPRWHRLALKLGC) are cytoplasmic. Residues 5–10 (VVYADL) carry the ITIM motif motif. The LCK-binding motif motif lies at 31-34 (CQCP). A helical; Signal-anchor for type II membrane protein membrane pass occupies residues 46-66 (ACFILLVLSVIGLGVLVLTLL). The Extracellular segment spans residues 67–223 (QKPLLQNSPA…LKRESTCNDS (157 aa)). In terms of domain architecture, C-type lectin spans 101-211 (HRDKCFHVSQ…CDSDNIWICQ (111 aa)). Intrachain disulfides connect C122/C210 and C189/C202.

In terms of assembly, homodimer; disulfide-linked. Interacts with tyrosine kinase LCK. Binds PTPN6/SHP-1 in a phosphorylation-dependent manner. As to expression, expressed in a subset of natural killer cells.

It is found in the membrane. Receptor for CLEC2D/OCIL. Ligand-binding contributes to inhibition of cytotoxic natural killer (NK) cells. May mediate MHC class I-independent 'missing-self' recognition of allografts, tumor cells and virus-infected cells. The polypeptide is Killer cell lectin-like receptor subfamily B member 1B allele C (Rattus norvegicus (Rat)).